Reading from the N-terminus, the 461-residue chain is General transcription factor IIH subunit 2 (461 aa).

The span at 1-13 (MSKNIYNNNAQNK) shows a compositional bias: polar residues. 2 disordered regions span residues 1-37 (MSKN…DEDG) and 61-83 (LRPS…DRDG). A compositionally biased stretch (basic and acidic residues) spans 61-71 (LRPSNQEERNT). Residues 98–275 (HLCLILDLSK…ESLMLKCQPP (178 aa)) enclose the VWFA domain. The C4-type zinc finger occupies 315 to 332 (CPRCGVKSCELPTDCQIC). Over residues 423-447 (TNGKTNGNEITNGNGNGNGNENENG) the composition is skewed to low complexity. The segment at 423-461 (TNGKTNGNEITNGNGNGNGNENENGNGNGNGNGNGNGLH) is disordered. A 13 X 2 tandem repeat of N-[GE] region spans residues 434–459 (NGNGNGNGNENENGNGNGNGNGNGNG). The span at 448–461 (NGNGNGNGNGNGLH) shows a compositional bias: gly residues.

It belongs to the GTF2H2 family. In terms of assembly, component of the 7-subunit TFIIH core complex composed of XPB/repB, XPD/repD, gtf2h1, gtf2h2, gtf2h3, gtf2h4 and gtf2h5, which is active in NER. The core complex associates with the 3-subunit CDK-activating kinase (CAK) module composed of cycH/cyclin H, cdk7 and mnat1 to form the 10-subunit holoenzyme (holo-TFIIH) active in transcription.

Its subcellular location is the nucleus. Its function is as follows. Component of the general transcription and DNA repair factor IIH (TFIIH) core complex, which is involved in general and transcription-coupled nucleotide excision repair (NER) of damaged DNA and, when complexed to CAK, in RNA transcription by RNA polymerase II. In NER, TFIIH acts by opening DNA around the lesion to allow the excision of the damaged oligonucleotide and its replacement by a new DNA fragment. In transcription, TFIIH has an essential role in transcription initiation. When the pre-initiation complex (PIC) has been established, TFIIH is required for promoter opening and promoter escape. Phosphorylation of the C-terminal tail (CTD) of the largest subunit of RNA polymerase II by the kinase module CAK controls the initiation of transcription. The polypeptide is General transcription factor IIH subunit 2 (gtf2h2) (Dictyostelium discoideum (Social amoeba)).